Reading from the N-terminus, the 1012-residue chain is Alanine--tRNA ligase, mitochondrial (1012 aa).

The transit peptide at 1-24 (MYNSAKQLQRVLTAREIRKTFLDH) directs the protein to the mitochondrion. Zn(2+)-binding residues include His-656, His-660, Cys-766, and His-770.

Belongs to the class-II aminoacyl-tRNA synthetase family. In terms of assembly, monomer. Requires Zn(2+) as cofactor.

The protein localises to the mitochondrion. It catalyses the reaction tRNA(Ala) + L-alanine + ATP = L-alanyl-tRNA(Ala) + AMP + diphosphate. Functionally, catalyzes the attachment of alanine to tRNA(Ala) in a two-step reaction: alanine is first activated by ATP to form Ala-AMP and then transferred to the acceptor end of tRNA(Ala). Also edits incorrectly charged tRNA(Ala) via its editing domain. The sequence is that of Alanine--tRNA ligase, mitochondrial from Drosophila melanogaster (Fruit fly).